The sequence spans 964 residues: uncharacterized protein (964 aa).

Residues 97–117 show a composition bias toward acidic residues; that stretch reads DSESDVGSDAESDAESDAESD. Residues 97-208 are disordered; sequence DSESDVGSDA…SNSIDNESES (112 aa). Low complexity predominate over residues 121-148; that stretch reads HTQNNTNTPINNITLINLDSSNNSTQSD. Residues 149-163 show a composition bias toward acidic residues; that stretch reads NESDNESDNESDNES. Low complexity predominate over residues 192–203; it reads NSDNIGNSNSID.

This is an uncharacterized protein from Acanthamoeba polyphaga (Amoeba).